Reading from the N-terminus, the 167-residue chain is NAD(P)H-quinone oxidoreductase subunit I, chloroplastic (167 aa).

2 consecutive 4Fe-4S ferredoxin-type domains span residues 55–84 (GRIHFEFDKCIACEVCVRVCPIDLPVVDWK) and 95–124 (LNYSIDFGICIFCGNCVEYCPTNCLSMTEE). Residues Cys64, Cys67, Cys70, Cys74, Cys104, Cys107, Cys110, and Cys114 each coordinate [4Fe-4S] cluster.

This sequence belongs to the complex I 23 kDa subunit family. As to quaternary structure, NDH is composed of at least 16 different subunits, 5 of which are encoded in the nucleus. It depends on [4Fe-4S] cluster as a cofactor.

The protein resides in the plastid. Its subcellular location is the chloroplast thylakoid membrane. It carries out the reaction a plastoquinone + NADH + (n+1) H(+)(in) = a plastoquinol + NAD(+) + n H(+)(out). The enzyme catalyses a plastoquinone + NADPH + (n+1) H(+)(in) = a plastoquinol + NADP(+) + n H(+)(out). NDH shuttles electrons from NAD(P)H:plastoquinone, via FMN and iron-sulfur (Fe-S) centers, to quinones in the photosynthetic chain and possibly in a chloroplast respiratory chain. The immediate electron acceptor for the enzyme in this species is believed to be plastoquinone. Couples the redox reaction to proton translocation, and thus conserves the redox energy in a proton gradient. The sequence is that of NAD(P)H-quinone oxidoreductase subunit I, chloroplastic from Morus indica (Mulberry).